Here is an 863-residue protein sequence, read N- to C-terminus: Protein translocase subunit SecA (863 aa).

Residues Gln-88, 106–110, and Asp-496 each bind ATP; that span reads GEGKT. The interval 818-842 is disordered; it reads EVKTEPVITKKKPARNEPCPCGSGK. Residues Cys-836, Cys-838, Cys-847, and Cys-848 each contribute to the Zn(2+) site.

This sequence belongs to the SecA family. Monomer and homodimer. Part of the essential Sec protein translocation apparatus which comprises SecA, SecYEG and auxiliary proteins SecDF-YajC and YidC. The cofactor is Zn(2+).

The protein localises to the cell inner membrane. The protein resides in the cytoplasm. It carries out the reaction ATP + H2O + cellular proteinSide 1 = ADP + phosphate + cellular proteinSide 2.. Functionally, part of the Sec protein translocase complex. Interacts with the SecYEG preprotein conducting channel. Has a central role in coupling the hydrolysis of ATP to the transfer of proteins into and across the cell membrane, serving as an ATP-driven molecular motor driving the stepwise translocation of polypeptide chains across the membrane. The polypeptide is Protein translocase subunit SecA (Nitratiruptor sp. (strain SB155-2)).